Consider the following 208-residue polypeptide: MSEWIEIGKIVAPQGLKGDLRVYPSSDFPERFTEPGKRWLLSPGQVEPISIELLSGRYVPGKGLYVIELAGIKSRQQAEALRNSQLLIEKGDRPQLEADEFYVPDLIGLTVINQLNGKTIGKVINIIFAGNDLLEVEKISTDTPVISEVVENNLPSKSKRSRDTKNQKKNQSPPSKKILIPFVKEIVPIVNFEQSIIEITPPDGLIDL.

One can recognise a PRC barrel domain in the interval 98–205; the sequence is ADEFYVPDLI…IIEITPPDGL (108 aa). Residues 154–174 are disordered; the sequence is LPSKSKRSRDTKNQKKNQSPP.

Belongs to the RimM family. In terms of assembly, binds ribosomal protein uS19.

It localises to the cytoplasm. An accessory protein needed during the final step in the assembly of 30S ribosomal subunit, possibly for assembly of the head region. Essential for efficient processing of 16S rRNA. May be needed both before and after RbfA during the maturation of 16S rRNA. It has affinity for free ribosomal 30S subunits but not for 70S ribosomes. The polypeptide is Ribosome maturation factor RimM (Trichodesmium erythraeum (strain IMS101)).